Here is a 125-residue protein sequence, read N- to C-terminus: Acidic phospholipase A2 6 (125 aa).

Residue Ser1 is a signal peptide. Residues 2–7 (NRPMPL) constitute a propeptide that is removed on maturation. 7 disulfides stabilise this stretch: Cys18-Cys77, Cys33-Cys124, Cys35-Cys50, Cys49-Cys105, Cys56-Cys98, Cys66-Cys91, and Cys84-Cys96. Asp30 contributes to the Zn(2+) binding site. Positions 34 and 36 each coordinate Ca(2+). His53 is an active-site residue. Ca(2+) is bound at residue Asp54. Asp99 is an active-site residue.

Heterodimer formed between isoform 5 and isoform 6 in presence of zinc ion and monomer in absence of zinc ion. Ca(2+) serves as cofactor. As to expression, expressed by the venom gland.

It localises to the secreted. The enzyme catalyses a 1,2-diacyl-sn-glycero-3-phosphocholine + H2O = a 1-acyl-sn-glycero-3-phosphocholine + a fatty acid + H(+). PLA2 catalyzes the calcium-dependent hydrolysis of the 2-acyl groups in 3-sn-phosphoglycerides. This is Acidic phospholipase A2 6 from Naja sagittifera (Andaman cobra).